Here is a 432-residue protein sequence, read N- to C-terminus: D-amino acid dehydrogenase (432 aa).

Residue 3–17 (VVILGSGVVGVTSAW) coordinates FAD.

It belongs to the DadA oxidoreductase family. FAD is required as a cofactor.

The catalysed reaction is a D-alpha-amino acid + A + H2O = a 2-oxocarboxylate + AH2 + NH4(+). It participates in amino-acid degradation; D-alanine degradation; NH(3) and pyruvate from D-alanine: step 1/1. Its function is as follows. Oxidative deamination of D-amino acids. This is D-amino acid dehydrogenase from Escherichia fergusonii (strain ATCC 35469 / DSM 13698 / CCUG 18766 / IAM 14443 / JCM 21226 / LMG 7866 / NBRC 102419 / NCTC 12128 / CDC 0568-73).